We begin with the raw amino-acid sequence, 85 residues long: uncharacterized protein (85 aa).

Over residues aspartate 64–histidine 76 the composition is skewed to basic and acidic residues. The segment at aspartate 64–serine 85 is disordered.

This is an uncharacterized protein from Mycobacterium bovis (strain ATCC BAA-935 / AF2122/97).